A 234-amino-acid polypeptide reads, in one-letter code: Large ribosomal subunit protein uL1 (234 aa).

Belongs to the universal ribosomal protein uL1 family. In terms of assembly, part of the 50S ribosomal subunit.

In terms of biological role, binds directly to 23S rRNA. The L1 stalk is quite mobile in the ribosome, and is involved in E site tRNA release. Its function is as follows. Protein L1 is also a translational repressor protein, it controls the translation of the L11 operon by binding to its mRNA. The protein is Large ribosomal subunit protein uL1 of Escherichia coli O127:H6 (strain E2348/69 / EPEC).